The following is a 413-amino-acid chain: MARLAPDGAQFDARQYDSKMNDLLAADGKDFFTSYDEVYDSFDAMGLQENLLRGIYAYGFEKPSAIQQRGIVPFCKGLDVIQQAQSGTGKTATFCSGILQQLDYGLVQCQALVLAPTRELAQQIEKVMRALGDYLGVKVHACVGGTSVREDQRILAAGVHVIVGTPGRVFDMLRRQSLRPDYLRMFVLDEADEMLSRGFKDQIYDIFQMLPTKVQVGVFSATMPPEALDITRKFMNKPVRILVKRDELTLEGIKQFYVNVDKEEWKLETLCDLYETLAITQSVIFVNTRRKVDWLTDKMRTRDHTVSATHGDMDQNTRDIIMREFRSGSSRVLITTDLLARGIDVQQVSLVINYDLPTQPENYLHRIGRSGRFGRKGVAINFVTTDDERMLFDIQKFYNVIIEELPSNVADLL.

The Q motif signature appears at 40 to 68 (DSFDAMGLQENLLRGIYAYGFEKPSAIQQ). The Helicase ATP-binding domain occupies 71–241 (IVPFCKGLDV…RKFMNKPVRI (171 aa)). 84 to 91 (AQSGTGKT) is an ATP binding site. Positions 189–192 (DEAD) match the DEAD box motif. A Helicase C-terminal domain is found at 252–413 (GIKQFYVNVD…ELPSNVADLL (162 aa)).

This sequence belongs to the DEAD box helicase family. eIF4A subfamily. EIF4F is a multi-subunit complex, the composition of which varies with external and internal environmental conditions. It is composed of at least EIF4A, EIF4E and EIF4G. In terms of tissue distribution, pollen specific.

The enzyme catalyses ATP + H2O = ADP + phosphate + H(+). Its function is as follows. ATP-dependent RNA helicase which is a subunit of the eIF4F complex involved in cap recognition and is required for mRNA binding to ribosome. In the current model of translation initiation, eIF4A unwinds RNA secondary structures in the 5'-UTR of mRNAs which is necessary to allow efficient binding of the small ribosomal subunit, and subsequent scanning for the initiator codon. The polypeptide is Eukaryotic initiation factor 4A-8 (Nicotiana tabacum (Common tobacco)).